Here is a 560-residue protein sequence, read N- to C-terminus: (E)-beta-farnesene synthase (560 aa).

Positions 312, 316, 457, and 465 each coordinate Mg(2+). The short motif at 312-316 (DDTFD) is the DDXXD motif element.

The protein belongs to the terpene synthase family. Mg(2+) serves as cofactor. Co(2+) is required as a cofactor. The cofactor is Mn(2+).

It is found in the cytoplasm. The catalysed reaction is (2E,6E)-farnesyl diphosphate = (E)-beta-farnesene + diphosphate. It functions in the pathway secondary metabolite biosynthesis; terpenoid biosynthesis. In terms of biological role, sesquiterpene cyclase catalyzing the production of beta-farnesene from farnesyl diphosphate. The protein is (E)-beta-farnesene synthase of Citrus junos (Yuzu).